Consider the following 427-residue polypeptide: uncharacterized protein (427 aa).

Positions 135–168 form a coiled coil; sequence PILKQKLVSLESKVKKIDKEMEKHNDLLKEIQEN.

This is an uncharacterized protein from Arabidopsis thaliana (Mouse-ear cress).